A 242-amino-acid chain; its full sequence is Phosphoribosylaminoimidazole-succinocarboxamide synthase (242 aa).

It belongs to the SAICAR synthetase family.

It catalyses the reaction 5-amino-1-(5-phospho-D-ribosyl)imidazole-4-carboxylate + L-aspartate + ATP = (2S)-2-[5-amino-1-(5-phospho-beta-D-ribosyl)imidazole-4-carboxamido]succinate + ADP + phosphate + 2 H(+). The protein operates within purine metabolism; IMP biosynthesis via de novo pathway; 5-amino-1-(5-phospho-D-ribosyl)imidazole-4-carboxamide from 5-amino-1-(5-phospho-D-ribosyl)imidazole-4-carboxylate: step 1/2. In Prochlorococcus marinus (strain MIT 9303), this protein is Phosphoribosylaminoimidazole-succinocarboxamide synthase.